The sequence spans 994 residues: Phosphoenolpyruvate carboxylase (994 aa).

Positions 1 to 67 (MKAVRSDKTT…GRTREDKDHP (67 aa)) are disordered. 2 stretches are compositionally biased toward low complexity: residues 9–24 (TTQA…PAKA) and 34–57 (AAPQ…PKAN). Active-site residues include His-204 and Lys-646.

It belongs to the PEPCase type 1 family. Requires Mg(2+) as cofactor.

It catalyses the reaction oxaloacetate + phosphate = phosphoenolpyruvate + hydrogencarbonate. Forms oxaloacetate, a four-carbon dicarboxylic acid source for the tricarboxylic acid cycle. The chain is Phosphoenolpyruvate carboxylase from Paraburkholderia xenovorans (strain LB400).